Reading from the N-terminus, the 109-residue chain is Aquaporin-2 (109 aa).

Topologically, residues 1-6 (SIAFSR) are cytoplasmic. A helical membrane pass occupies residues 7–27 (AVFAEFLATLLFVFFGLGSAL). The Extracellular portion of the chain corresponds to 28–35 (NWPSALPS). The helical transmembrane segment at 36 to 54 (TLQIAMAFGLGIGTLVQAL) threads the bilayer. Residues 55–59 (GHVSG) are Cytoplasmic-facing. Positions 60–69 (AHINPAVTVA) form an intramembrane region, discontinuously helical. An NPA 1 motif is present at residues 63–65 (NPA). At 70 to 80 (CLVGCHVSFLR) the chain is on the cytoplasmic side. A helical membrane pass occupies residues 81-102 (AAFYVAAQLLGAVAGAALLHEI). The Extracellular portion of the chain corresponds to 103-109 (TPAEVRG).

The protein belongs to the MIP/aquaporin (TC 1.A.8) family. In terms of assembly, homotetramer. Serine phosphorylation is necessary and sufficient for expression at the apical membrane. Endocytosis is not phosphorylation-dependent. Post-translationally, N-glycosylated.

Its subcellular location is the apical cell membrane. It is found in the basolateral cell membrane. The protein resides in the cell membrane. The protein localises to the cytoplasmic vesicle membrane. It localises to the golgi apparatus. Its subcellular location is the trans-Golgi network membrane. The catalysed reaction is H2O(in) = H2O(out). It carries out the reaction glycerol(in) = glycerol(out). Forms a water-specific channel that provides the plasma membranes of renal collecting duct with high permeability to water, thereby permitting water to move in the direction of an osmotic gradient. Plays an essential role in renal water homeostasis. Could also be permeable to glycerol. This is Aquaporin-2 from Oryctolagus cuniculus (Rabbit).